We begin with the raw amino-acid sequence, 128 residues long: Small ribosomal subunit protein uS9 (128 aa).

A disordered region spans residues 106–128; the sequence is SRKVERKKPGRPKARKKFQFSKR. Residues 109 to 128 show a composition bias toward basic residues; the sequence is VERKKPGRPKARKKFQFSKR.

It belongs to the universal ribosomal protein uS9 family.

This Azobacteroides pseudotrichonymphae genomovar. CFP2 protein is Small ribosomal subunit protein uS9.